A 497-amino-acid polypeptide reads, in one-letter code: Guanosine-5'-triphosphate,3'-diphosphate pyrophosphatase (497 aa).

It belongs to the GppA/Ppx family. GppA subfamily.

The enzyme catalyses guanosine 3'-diphosphate 5'-triphosphate + H2O = guanosine 3',5'-bis(diphosphate) + phosphate + H(+). Its pathway is purine metabolism; ppGpp biosynthesis; ppGpp from GTP: step 2/2. Functionally, catalyzes the conversion of pppGpp to ppGpp. Guanosine pentaphosphate (pppGpp) is a cytoplasmic signaling molecule which together with ppGpp controls the 'stringent response', an adaptive process that allows bacteria to respond to amino acid starvation, resulting in the coordinated regulation of numerous cellular activities. The protein is Guanosine-5'-triphosphate,3'-diphosphate pyrophosphatase of Photobacterium profundum (strain SS9).